We begin with the raw amino-acid sequence, 156 residues long: UPF0225 protein PFLU_1319 (156 aa).

Belongs to the UPF0225 family.

The chain is UPF0225 protein PFLU_1319 from Pseudomonas fluorescens (strain SBW25).